A 112-amino-acid polypeptide reads, in one-letter code: CRISPR-associated endoribonuclease Cas2 2 (112 aa).

Asp15 contributes to the Mg(2+) binding site.

Belongs to the CRISPR-associated endoribonuclease Cas2 protein family. Homodimer, forms a heterotetramer with a Cas1 homodimer. Mg(2+) is required as a cofactor.

In terms of biological role, CRISPR (clustered regularly interspaced short palindromic repeat), is an adaptive immune system that provides protection against mobile genetic elements (viruses, transposable elements and conjugative plasmids). CRISPR clusters contain sequences complementary to antecedent mobile elements and target invading nucleic acids. CRISPR clusters are transcribed and processed into CRISPR RNA (crRNA). Functions as a ssRNA-specific endoribonuclease. Involved in the integration of spacer DNA into the CRISPR cassette. This is CRISPR-associated endoribonuclease Cas2 2 from Rhodospirillum rubrum (strain ATCC 11170 / ATH 1.1.1 / DSM 467 / LMG 4362 / NCIMB 8255 / S1).